The following is a 142-amino-acid chain: Ribosome maturation factor RimP (142 aa).

It belongs to the RimP family.

Its subcellular location is the cytoplasm. Functionally, required for maturation of 30S ribosomal subunits. This Sulfurovum sp. (strain NBC37-1) protein is Ribosome maturation factor RimP.